Here is a 72-residue protein sequence, read N- to C-terminus: Small ribosomal subunit protein bS20 (72 aa).

This sequence belongs to the bacterial ribosomal protein bS20 family.

In terms of biological role, binds directly to 16S ribosomal RNA. This chain is Small ribosomal subunit protein bS20 (rpsT), found in Proteus mirabilis.